A 500-amino-acid chain; its full sequence is Probable cytosol aminopeptidase (500 aa).

Residues K274 and D279 each coordinate Mn(2+). Residue K286 is part of the active site. Residues D297, D356, and E358 each contribute to the Mn(2+) site. Residue R360 is part of the active site.

It belongs to the peptidase M17 family. It depends on Mn(2+) as a cofactor.

The protein localises to the cytoplasm. The catalysed reaction is Release of an N-terminal amino acid, Xaa-|-Yaa-, in which Xaa is preferably Leu, but may be other amino acids including Pro although not Arg or Lys, and Yaa may be Pro. Amino acid amides and methyl esters are also readily hydrolyzed, but rates on arylamides are exceedingly low.. It catalyses the reaction Release of an N-terminal amino acid, preferentially leucine, but not glutamic or aspartic acids.. Presumably involved in the processing and regular turnover of intracellular proteins. Catalyzes the removal of unsubstituted N-terminal amino acids from various peptides. In Saccharophagus degradans (strain 2-40 / ATCC 43961 / DSM 17024), this protein is Probable cytosol aminopeptidase.